Reading from the N-terminus, the 289-residue chain is Oxaloacetate decarboxylase (289 aa).

A substrate-binding site is contributed by serine 47. A Mg(2+)-binding site is contributed by aspartate 85. Substrate is bound by residues arginine 156 and histidine 232.

It belongs to the isocitrate lyase/PEP mutase superfamily. Oxaloacetate decarboxylase family. In terms of assembly, homotetramer; dimer of dimers. The cofactor is Mg(2+).

The enzyme catalyses oxaloacetate + H(+) = pyruvate + CO2. Its function is as follows. Catalyzes the decarboxylation of oxaloacetate into pyruvate. Seems to play a role in maintaining cellular concentrations of bicarbonate and pyruvate. The polypeptide is Oxaloacetate decarboxylase (Rhodopseudomonas palustris (strain HaA2)).